A 466-amino-acid polypeptide reads, in one-letter code: ATP synthase subunit beta, sodium ion specific (466 aa).

153–160 (GGAGVGKT) lines the ATP pocket.

It belongs to the ATPase alpha/beta chains family. As to quaternary structure, F-type ATPases have 2 components, CF(1) - the catalytic core - and CF(0) - the membrane proton channel. CF(1) has five subunits: alpha(3), beta(3), gamma(1), delta(1), epsilon(1). CF(0) has three main subunits: a, b and c.

It is found in the cell membrane. It catalyses the reaction 4 Na(+)(in) + ATP + H2O = 4 Na(+)(out) + ADP + phosphate + H(+). With respect to regulation, inhibited by nitrate. Produces ATP from ADP in the presence of a sodium ion gradient across the membrane. The beta chain is the catalytic subunit. The polypeptide is ATP synthase subunit beta, sodium ion specific (Acetobacterium woodii (strain ATCC 29683 / DSM 1030 / JCM 2381 / KCTC 1655 / WB1)).